Consider the following 80-residue polypeptide: uncharacterized protein (80 aa).

The N-terminal stretch at 1-15 is a signal peptide; the sequence is MVKLSFTLRFGDVWV.

This is an uncharacterized protein from Archaeoglobus fulgidus (strain ATCC 49558 / DSM 4304 / JCM 9628 / NBRC 100126 / VC-16).